A 155-amino-acid chain; its full sequence is Endoribonuclease YbeY (155 aa).

Zn(2+) contacts are provided by histidine 114, histidine 118, and histidine 124.

Belongs to the endoribonuclease YbeY family. The cofactor is Zn(2+).

Its subcellular location is the cytoplasm. In terms of biological role, single strand-specific metallo-endoribonuclease involved in late-stage 70S ribosome quality control and in maturation of the 3' terminus of the 16S rRNA. The sequence is that of Endoribonuclease YbeY from Citrobacter koseri (strain ATCC BAA-895 / CDC 4225-83 / SGSC4696).